The primary structure comprises 385 residues: Probable threonine protease PRSS50 (385 aa).

An N-terminal signal peptide occupies residues 1–39 (MGRWCQTVARGQRPRTSAPSRAGALLLLLLLLRSAGCWG). In terms of domain architecture, Peptidase S1 spans 93–358 (VSEGKVDPYR…YQHWIWDCLN (266 aa)). An N-linked (GlcNAc...) asparagine glycan is attached at asparagine 133. Cysteines 138 and 154 form a disulfide. Catalysis depends on charge relay system residues histidine 153 and aspartate 206. Disulfide bonds link cysteine 240–cysteine 316, cysteine 273–cysteine 296, and cysteine 306–cysteine 334. Asparagine 279 carries an N-linked (GlcNAc...) asparagine glycan. The active-site Charge relay system is threonine 310.

Belongs to the peptidase S1 family. In terms of tissue distribution, testis specific. Differentially expressed in some breast cancer tissues.

It localises to the endoplasmic reticulum. May be involved in proteolysis through its threonine endopeptidase activity. The sequence is that of Probable threonine protease PRSS50 (PRSS50) from Homo sapiens (Human).